A 1520-amino-acid polypeptide reads, in one-letter code: DNA-directed RNA polymerase subunit beta'' (1520 aa).

The Zn(2+) site is built by Cys-220, Cys-296, Cys-303, and Cys-306. 2 stretches are compositionally biased toward basic and acidic residues: residues 645–654 (TREEEYRTRE) and 664–674 (PENKYRTREGE). Disordered stretches follow at residues 645–676 (TREE…GEGE) and 705–786 (YRTL…KKEG). 2 stretches are compositionally biased toward acidic residues: residues 730 to 748 (GEYE…SSED) and 756 to 779 (TLEE…PEED).

Belongs to the RNA polymerase beta' chain family. RpoC2 subfamily. As to quaternary structure, in plastids the minimal PEP RNA polymerase catalytic core is composed of four subunits: alpha, beta, beta', and beta''. When a (nuclear-encoded) sigma factor is associated with the core the holoenzyme is formed, which can initiate transcription. It depends on Zn(2+) as a cofactor.

Its subcellular location is the plastid. The protein resides in the chloroplast. It carries out the reaction RNA(n) + a ribonucleoside 5'-triphosphate = RNA(n+1) + diphosphate. Its function is as follows. DNA-dependent RNA polymerase catalyzes the transcription of DNA into RNA using the four ribonucleoside triphosphates as substrates. In Sorghum bicolor (Sorghum), this protein is DNA-directed RNA polymerase subunit beta''.